The primary structure comprises 284 residues: RNase adapter protein RapZ (284 aa).

8-15 (GRSGSGKS) is an ATP binding site. 56–59 (DVRN) lines the GTP pocket. The segment at 266–284 (RSRGKNVQSRHRTLEKRKP) is RNA-binding.

The protein belongs to the RapZ-like family. RapZ subfamily. Homotrimer.

Modulates the synthesis of GlmS, by affecting the processing and stability of the regulatory small RNA GlmZ. When glucosamine-6-phosphate (GlcN6P) concentrations are high in the cell, RapZ binds GlmZ and targets it to cleavage by RNase E. Consequently, GlmZ is inactivated and unable to activate GlmS synthesis. Under low GlcN6P concentrations, RapZ is sequestered and inactivated by an other regulatory small RNA, GlmY, preventing GlmZ degradation and leading to synthesis of GlmS. In Shigella dysenteriae serotype 1 (strain Sd197), this protein is RNase adapter protein RapZ.